Reading from the N-terminus, the 281-residue chain is Pantothenate synthetase (281 aa).

26–33 (MGYLHQGH) provides a ligand contact to ATP. Catalysis depends on His33, which acts as the Proton donor. Gln57 is a (R)-pantoate binding site. A beta-alanine-binding site is contributed by Gln57. ATP is bound at residue 143–146 (GQKD). Gln149 provides a ligand contact to (R)-pantoate. ATP contacts are provided by residues Val172 and 180 to 183 (LSSR).

It belongs to the pantothenate synthetase family. In terms of assembly, homodimer.

It localises to the cytoplasm. It carries out the reaction (R)-pantoate + beta-alanine + ATP = (R)-pantothenate + AMP + diphosphate + H(+). It participates in cofactor biosynthesis; (R)-pantothenate biosynthesis; (R)-pantothenate from (R)-pantoate and beta-alanine: step 1/1. Its function is as follows. Catalyzes the condensation of pantoate with beta-alanine in an ATP-dependent reaction via a pantoyl-adenylate intermediate. This chain is Pantothenate synthetase, found in Chloroflexus aurantiacus (strain ATCC 29366 / DSM 635 / J-10-fl).